We begin with the raw amino-acid sequence, 72 residues long: DNA gyrase inhibitor YacG (72 aa).

Residues C17, C20, C32, and C36 each coordinate Zn(2+). Residues 52 to 72 (PGPEEDEMSYPPHSNDGNRSR) form a disordered region.

It belongs to the DNA gyrase inhibitor YacG family. Interacts with GyrB. The cofactor is Zn(2+).

Functionally, inhibits all the catalytic activities of DNA gyrase by preventing its interaction with DNA. Acts by binding directly to the C-terminal domain of GyrB, which probably disrupts DNA binding by the gyrase. This is DNA gyrase inhibitor YacG from Methylorubrum extorquens (strain CM4 / NCIMB 13688) (Methylobacterium extorquens).